An 878-amino-acid chain; its full sequence is Alanine--tRNA ligase (878 aa).

Residues His-562, His-566, Cys-670, and His-674 each coordinate Zn(2+).

It belongs to the class-II aminoacyl-tRNA synthetase family. Zn(2+) is required as a cofactor.

The protein resides in the cytoplasm. The enzyme catalyses tRNA(Ala) + L-alanine + ATP = L-alanyl-tRNA(Ala) + AMP + diphosphate. In terms of biological role, catalyzes the attachment of alanine to tRNA(Ala) in a two-step reaction: alanine is first activated by ATP to form Ala-AMP and then transferred to the acceptor end of tRNA(Ala). Also edits incorrectly charged Ser-tRNA(Ala) and Gly-tRNA(Ala) via its editing domain. This chain is Alanine--tRNA ligase, found in Acinetobacter baumannii (strain ACICU).